Reading from the N-terminus, the 419-residue chain is CCA-adding enzyme (419 aa).

The ATP site is built by serine 54 and arginine 57. CTP is bound by residues serine 54 and arginine 57. Mg(2+) is bound by residues aspartate 66, aspartate 68, and aspartate 118. Positions 141, 161, and 170 each coordinate ATP. The CTP site is built by histidine 141, lysine 161, and tyrosine 170.

Belongs to the tRNA nucleotidyltransferase/poly(A) polymerase family. Archaeal CCA-adding enzyme subfamily. Homodimer. Mg(2+) is required as a cofactor.

The catalysed reaction is a tRNA precursor + 2 CTP + ATP = a tRNA with a 3' CCA end + 3 diphosphate. The enzyme catalyses a tRNA with a 3' CCA end + 2 CTP + ATP = a tRNA with a 3' CCACCA end + 3 diphosphate. Catalyzes the addition and repair of the essential 3'-terminal CCA sequence in tRNAs without using a nucleic acid template. Adds these three nucleotides in the order of C, C, and A to the tRNA nucleotide-73, using CTP and ATP as substrates and producing inorganic pyrophosphate. tRNA 3'-terminal CCA addition is required both for tRNA processing and repair. Also involved in tRNA surveillance by mediating tandem CCA addition to generate a CCACCA at the 3' terminus of unstable tRNAs. While stable tRNAs receive only 3'-terminal CCA, unstable tRNAs are marked with CCACCA and rapidly degraded. The sequence is that of CCA-adding enzyme from Pyrobaculum aerophilum (strain ATCC 51768 / DSM 7523 / JCM 9630 / CIP 104966 / NBRC 100827 / IM2).